Reading from the N-terminus, the 79-residue chain is Large ribosomal subunit protein bL28 (79 aa).

The protein belongs to the bacterial ribosomal protein bL28 family.

The chain is Large ribosomal subunit protein bL28 from Porphyromonas gingivalis (strain ATCC 33277 / DSM 20709 / CIP 103683 / JCM 12257 / NCTC 11834 / 2561).